A 312-amino-acid chain; its full sequence is Light-independent protochlorophyllide reductase iron-sulfur ATP-binding protein (312 aa).

ATP contacts are provided by residues 55–60 (GIGKST) and lysine 84. Mg(2+) is bound at residue serine 59. Residues cysteine 140 and cysteine 174 each contribute to the [4Fe-4S] cluster site. Residues 225–226 (NR) and 249–251 (PDL) each bind ATP.

Belongs to the NifH/BchL/ChlL family. In terms of assembly, homodimer. Protochlorophyllide reductase is composed of three subunits; BchL, BchN and BchB. It depends on [4Fe-4S] cluster as a cofactor.

It catalyses the reaction chlorophyllide a + oxidized 2[4Fe-4S]-[ferredoxin] + 2 ADP + 2 phosphate = protochlorophyllide a + reduced 2[4Fe-4S]-[ferredoxin] + 2 ATP + 2 H2O. Its pathway is porphyrin-containing compound metabolism; bacteriochlorophyll biosynthesis (light-independent). Functionally, component of the dark-operative protochlorophyllide reductase (DPOR) that uses Mg-ATP and reduced ferredoxin to reduce ring D of protochlorophyllide (Pchlide) to form chlorophyllide a (Chlide). This reaction is light-independent. The L component serves as a unique electron donor to the NB-component of the complex, and binds Mg-ATP. In Rhodopseudomonas palustris (strain BisB18), this protein is Light-independent protochlorophyllide reductase iron-sulfur ATP-binding protein.